The chain runs to 152 residues: Snaclec lebecin subunit alpha (152 aa).

The N-terminal stretch at 1 to 23 is a signal peptide; that stretch reads MGRSISVSFGLLVVFLSLSGTGA. 3 disulfide bridges follow: C27–C38, C54–C147, and C122–C139. Residues 34–148 enclose the C-type lectin domain; it reads YEGGCYYVFD…CELAYHFICS (115 aa).

As to quaternary structure, heterodimer with the beta subunit (AC W5XCJ6); disulfide-linked. Expressed by the venom gland.

Its subcellular location is the secreted. Its function is as follows. Inhibits human breast cancer cells (MDA-MB231) migration and proliferation, as well as their adhesion to fibrinogen and fibronectin. This inhibition may be due to the binding to receptors of the integrin family, probably alpha-v/beta-3 (ITGAV/ITGB3) (40% inhibition of cell adhesion) and alpha-5/beta-1 (ITGA5/ITGB1) (by comparison with lebectin). This chain is Snaclec lebecin subunit alpha, found in Macrovipera lebetinus (Levantine viper).